Consider the following 892-residue polypeptide: Alanine--tRNA ligase (892 aa).

Zn(2+)-binding residues include His574, His578, Cys676, and His680.

Belongs to the class-II aminoacyl-tRNA synthetase family. Requires Zn(2+) as cofactor.

The protein localises to the cytoplasm. The enzyme catalyses tRNA(Ala) + L-alanine + ATP = L-alanyl-tRNA(Ala) + AMP + diphosphate. In terms of biological role, catalyzes the attachment of alanine to tRNA(Ala) in a two-step reaction: alanine is first activated by ATP to form Ala-AMP and then transferred to the acceptor end of tRNA(Ala). Also edits incorrectly charged Ser-tRNA(Ala) and Gly-tRNA(Ala) via its editing domain. In Prochlorococcus marinus (strain SARG / CCMP1375 / SS120), this protein is Alanine--tRNA ligase.